A 430-amino-acid chain; its full sequence is Enolase (430 aa).

Position 163 (Gln-163) interacts with (2R)-2-phosphoglycerate. Glu-205 (proton donor) is an active-site residue. Asp-242, Glu-286, and Asp-313 together coordinate Mg(2+). Positions 338, 367, 368, and 389 each coordinate (2R)-2-phosphoglycerate. The active-site Proton acceptor is the Lys-338.

The protein belongs to the enolase family. The cofactor is Mg(2+).

The protein resides in the cytoplasm. It localises to the secreted. The protein localises to the cell surface. The catalysed reaction is (2R)-2-phosphoglycerate = phosphoenolpyruvate + H2O. The protein operates within carbohydrate degradation; glycolysis; pyruvate from D-glyceraldehyde 3-phosphate: step 4/5. In terms of biological role, catalyzes the reversible conversion of 2-phosphoglycerate (2-PG) into phosphoenolpyruvate (PEP). It is essential for the degradation of carbohydrates via glycolysis. The protein is Enolase of Symbiobacterium thermophilum (strain DSM 24528 / JCM 14929 / IAM 14863 / T).